We begin with the raw amino-acid sequence, 303 residues long: Elongation factor Ts (303 aa).

The involved in Mg(2+) ion dislocation from EF-Tu stretch occupies residues 79 to 82; it reads TDFV.

This sequence belongs to the EF-Ts family.

The protein resides in the cytoplasm. In terms of biological role, associates with the EF-Tu.GDP complex and induces the exchange of GDP to GTP. It remains bound to the aminoacyl-tRNA.EF-Tu.GTP complex up to the GTP hydrolysis stage on the ribosome. The chain is Elongation factor Ts from Syntrophotalea carbinolica (strain DSM 2380 / NBRC 103641 / GraBd1) (Pelobacter carbinolicus).